The sequence spans 318 residues: Rhomboid-related protein 4 (318 aa).

Over 1-21 (MQRRSRGINTGLILLLSQIFH) the chain is Cytoplasmic. The helical transmembrane segment at 22–42 (VGINNIPPVTLATLALNIWFF) threads the bilayer. The Extracellular segment spans residues 43–106 (LNPQKPLYSS…RRLGSRWFAY (64 aa)). The chain crosses the membrane as a helical span at residues 107–127 (VITTFSVLTGVVYLLLQFAVA). Over 128–137 (EFMDEPDFKR) the chain is Cytoplasmic. The chain crosses the membrane as a helical span at residues 138-154 (SCAVGFSGVLFALKVLN). S144 serves as the catalytic Nucleophile. The Extracellular segment spans residues 155–179 (NHYCPGGFVNILGFPVPNRFACWVE). A helical transmembrane segment spans residues 180-204 (LVAIHLFSPGTSFAGHQAGILVGLM). H195 is an active-site residue. The Cytoplasmic segment spans residues 205–318 (YTQGPLKKIM…RQRLHRFDSQ (114 aa)). The tract at residues 271–286 (SEEEQLERALQASLWD) is ubiquitin-binding domain (UBD). The tract at residues 285–318 (WDRGHTRNSPPPYGFHLSPEEEMRRQRLHRFDSQ) is disordered. Residues 302-318 (SPEEEMRRQRLHRFDSQ) are compositionally biased toward basic and acidic residues. The VCP/p97-interacting motif (VIM) stretch occupies residues 303–318 (PEEEMRRQRLHRFDSQ).

It belongs to the peptidase S54 family. As to quaternary structure, interacts with BIK and STEAP3. Interacts (via C-terminal domain) with VCP. Interacts with ubiquitin and ubiquitinated proteins.

It is found in the endoplasmic reticulum membrane. The protein localises to the mitochondrion membrane. The enzyme catalyses Cleaves type-1 transmembrane domains using a catalytic dyad composed of serine and histidine that are contributed by different transmembrane domains.. With respect to regulation, inhibited by aprotinin. Its function is as follows. Intramembrane-cleaving serine protease that cleaves single transmembrane or multi-pass membrane proteins in the hydrophobic plane of the membrane, luminal loops and juxtamembrane regions. Involved in regulated intramembrane proteolysis and the subsequent release of functional polypeptides from their membrane anchors. Functional component of endoplasmic reticulum-associated degradation (ERAD) for misfolded membrane proteins. Required for the degradation process of some specific misfolded endoplasmic reticulum (ER) luminal proteins. Participates in the transfer of misfolded proteins from the ER to the cytosol, where they are destroyed by the proteasome in a ubiquitin-dependent manner. Functions in BIK, MPZ, PKD1, PTCRA, RHO, STEAP3 and TRAC processing. Involved in the regulation of exosomal secretion; inhibits the TSAP6-mediated secretion pathway. Involved in the regulation of apoptosis; modulates BIK-mediated apoptotic activity. Also plays a role in the regulation of spermatogenesis; inhibits apoptotic activity in spermatogonia. The protein is Rhomboid-related protein 4 (RHBDD1) of Pongo abelii (Sumatran orangutan).